A 384-amino-acid chain; its full sequence is 1-deoxy-D-xylulose 5-phosphate reductoisomerase (384 aa).

NADPH is bound by residues threonine 10, glycine 11, serine 12, isoleucine 13, glycine 36, asparagine 38, and asparagine 122. Lysine 123 contributes to the 1-deoxy-D-xylulose 5-phosphate binding site. Glutamate 124 serves as a coordination point for NADPH. Aspartate 148 contributes to the Mn(2+) binding site. 1-deoxy-D-xylulose 5-phosphate contacts are provided by serine 149, glutamate 150, serine 174, and histidine 197. Glutamate 150 serves as a coordination point for Mn(2+). Glycine 203 serves as a coordination point for NADPH. Positions 210, 215, 216, and 219 each coordinate 1-deoxy-D-xylulose 5-phosphate. Glutamate 219 contributes to the Mn(2+) binding site.

The protein belongs to the DXR family. It depends on Mg(2+) as a cofactor. Mn(2+) serves as cofactor.

It catalyses the reaction 2-C-methyl-D-erythritol 4-phosphate + NADP(+) = 1-deoxy-D-xylulose 5-phosphate + NADPH + H(+). It functions in the pathway isoprenoid biosynthesis; isopentenyl diphosphate biosynthesis via DXP pathway; isopentenyl diphosphate from 1-deoxy-D-xylulose 5-phosphate: step 1/6. Functionally, catalyzes the NADPH-dependent rearrangement and reduction of 1-deoxy-D-xylulose-5-phosphate (DXP) to 2-C-methyl-D-erythritol 4-phosphate (MEP). The chain is 1-deoxy-D-xylulose 5-phosphate reductoisomerase from Geotalea daltonii (strain DSM 22248 / JCM 15807 / FRC-32) (Geobacter daltonii).